We begin with the raw amino-acid sequence, 393 residues long: High mobility group protein DSP1 (393 aa).

The disordered stretch occupies residues 153–179 (QMQQQQQQQNVINSASPMSRVKADAKP). DNA-binding regions (HMG box) lie at residues 179 to 249 (PRGR…QNYV) and 271 to 339 (PKRS…TEYK). Positions 364-374 (LLAAAAQQQHQ) are enriched in low complexity. Positions 364 to 393 (LLAAAAQQQHQQLEEQHDDDDGDGDDDENQ) are disordered. Positions 379-393 (QHDDDDGDGDDDENQ) are enriched in acidic residues.

This sequence belongs to the HMGB family.

It is found in the nucleus. The protein resides in the chromosome. Its function is as follows. Binds preferentially single-stranded DNA and unwinds double-stranded DNA. The polypeptide is High mobility group protein DSP1 (Dsp1) (Drosophila melanogaster (Fruit fly)).